The sequence spans 554 residues: Rab GTPase-binding effector protein 2 (554 aa).

A compositionally biased stretch (low complexity) spans 1-15; sequence MAAAPAALALDPQPQ. 3 disordered regions span residues 1-29, 167-250, and 375-395; these read MAAA…ELSR, IQRR…ETAS, and EQLP…DEAL. Residues 15–173 are a coiled coil; the sequence is QEEQKDASES…IQEIQRRPRQ (159 aa). The segment covering 16–29 has biased composition (basic and acidic residues); that stretch reads EEQKDASESSELSR. 4 positions are modified to phosphoserine: Ser-176, Ser-180, Ser-187, and Ser-191. The stretch at 274–512 forms a coiled coil; the sequence is DSQWEQLQVE…LETSEQVQRD (239 aa). Residues 377 to 386 show a composition bias toward polar residues; sequence LPSSALQGSE.

It belongs to the rabaptin family. As to quaternary structure, heterodimer with RABGEF1. The dimer binds RAB5A that has been activated by GTP-binding. Interacts with SDCCAG8; this interaction is important for ciliogenesis regulation. Interacts with RAB4A; this interaction may mediate VEGFR2 cell surface expression.

It is found in the cytoplasm. It localises to the early endosome. Its subcellular location is the cytoskeleton. The protein localises to the microtubule organizing center. The protein resides in the centrosome. It is found in the cilium basal body. Plays a role in membrane trafficking and in homotypic early endosome fusion. Participates in arteriogenesis by regulating vascular endothelial growth factor receptor 2/VEGFR2 cell surface expression and endosomal trafficking. By interacting with SDCCAG8, localizes to centrosomes and plays a critical role in ciliogenesis. This is Rab GTPase-binding effector protein 2 (Rabep2) from Rattus norvegicus (Rat).